Reading from the N-terminus, the 541-residue chain is Chaperonin GroEL 1 (541 aa).

ATP is bound by residues 29–32 (TLGP), 86–90 (DGTTT), glycine 413, 477–479 (NAA), and aspartate 493.

This sequence belongs to the chaperonin (HSP60) family. As to quaternary structure, forms a cylinder of 14 subunits composed of two heptameric rings stacked back-to-back. Interacts with the co-chaperonin GroES.

The protein localises to the cytoplasm. The catalysed reaction is ATP + H2O + a folded polypeptide = ADP + phosphate + an unfolded polypeptide.. Together with its co-chaperonin GroES, plays an essential role in assisting protein folding. The GroEL-GroES system forms a nano-cage that allows encapsulation of the non-native substrate proteins and provides a physical environment optimized to promote and accelerate protein folding. The polypeptide is Chaperonin GroEL 1 (Paenarthrobacter aurescens (strain TC1)).